The chain runs to 67 residues: Large ribosomal subunit protein uL29 (67 aa).

Belongs to the universal ribosomal protein uL29 family.

This is Large ribosomal subunit protein uL29 from Alkaliphilus metalliredigens (strain QYMF).